Consider the following 682-residue polypeptide: Potassium-transporting ATPase ATP-binding subunit (682 aa).

Helical transmembrane passes span 34 to 54, 58 to 78, 219 to 239, and 254 to 274; these read PVMFVVWAGSVLTTLLTLAMV, IAGSALFTGVISLWLWFTVLF, IALTILLIALTIVFLLATATL, and VLVALLVCLIPTTIGGLLSAI. Residue Asp307 is the 4-aspartylphosphate intermediate of the active site. ATP is bound by residues Asp344, Glu348, 377–384, and Lys395; that span reads FTAQSRMS. 2 residues coordinate Mg(2+): Asp518 and Asp522. Transmembrane regions (helical) follow at residues 588–608, 616–636, and 662–682; these read FAIIPAAFAATYPQLNALNVM, AILSAVIFNALIIIFLIPLAL, and LVVPFIGIKVIDVLLTLLGLA.

The protein belongs to the cation transport ATPase (P-type) (TC 3.A.3) family. Type IA subfamily. The system is composed of three essential subunits: KdpA, KdpB and KdpC.

The protein resides in the cell inner membrane. It catalyses the reaction K(+)(out) + ATP + H2O = K(+)(in) + ADP + phosphate + H(+). Its function is as follows. Part of the high-affinity ATP-driven potassium transport (or Kdp) system, which catalyzes the hydrolysis of ATP coupled with the electrogenic transport of potassium into the cytoplasm. This subunit is responsible for energy coupling to the transport system and for the release of the potassium ions to the cytoplasm. This chain is Potassium-transporting ATPase ATP-binding subunit, found in Salmonella paratyphi B (strain ATCC BAA-1250 / SPB7).